Reading from the N-terminus, the 504-residue chain is Anaerobic nitric oxide reductase transcription regulator NorR (504 aa).

Residue aspartate 57 is modified to 4-aspartylphosphate. In terms of domain architecture, Sigma-54 factor interaction spans methionine 187–valine 416. ATP-binding positions include glycine 215–glutamate 222 and alanine 278–glutamate 287. The segment at residues tryptophan 479–lysine 498 is a DNA-binding region (H-T-H motif).

The protein operates within nitrogen metabolism; nitric oxide reduction. In terms of biological role, required for the expression of anaerobic nitric oxide (NO) reductase, acts as a transcriptional activator for at least the norVW operon. Activation also requires sigma-54. This chain is Anaerobic nitric oxide reductase transcription regulator NorR, found in Shigella boydii serotype 4 (strain Sb227).